A 1362-amino-acid polypeptide reads, in one-letter code: Bromodomain-containing protein 4 (1362 aa).

The segment at 1 to 58 (MSAESGPGTRLRNLPVMGDGLETSQMSTTQAQAQPQPANAASTNPPPPETSNPNKPKR) is disordered. Residues 23-43 (TSQMSTTQAQAQPQPANAAST) show a composition bias toward low complexity. The 107-residue stretch at 58–164 (RQTNQLQYLL…KLFLQKINEL (107 aa)) folds into the Bromo 1 domain. Lys99 participates in a covalent cross-link: Glycyl lysine isopeptide (Lys-Gly) (interchain with G-Cter in SUMO2). Disordered stretches follow at residues 174-229 (VQAK…PAVT), 242-352 (VPPQ…KVSE), and 463-615 (EPVV…YEEK). A compositionally biased stretch (low complexity) spans 197–211 (PNTTQASTPPQTQTP). Composition is skewed to pro residues over residues 212-227 (QPNPPPVQATPHPFPA) and 243-266 (PPQPLQTPPPVPPQPQPPPAPAPQ). The span at 320 to 336 (QRRESSRPVKPPKKDVP) shows a compositional bias: basic and acidic residues. The region spanning 348-457 (SKVSEQLKCC…DVFEMRFAKM (110 aa)) is the Bromo 2 domain. Ser470 is modified (phosphoserine). Low complexity predominate over residues 478-497 (KVVAPPSSSDSSSDSSSDSD). Phosphoserine; by CK2 is present on residues Ser484, Ser488, Ser492, Ser494, Ser498, Ser499, and Ser503. Positions 484-503 (SSSDSSSDSSSDSDSSTDDS) are NPS region. The segment at 524-579 (QLAALSQPQQNKPKKKEKDKKEKKKEKHKRKEEVEENKKSKAKEPPPKKTKKNNSS) is BID region. Residues 535–553 (KPKKKEKDKKEKKKEKHKR) are compositionally biased toward basic residues. Basic and acidic residues predominate over residues 554-570 (KEEVEENKKSKAKEPPP). Lys585 participates in a covalent cross-link: Glycyl lysine isopeptide (Lys-Gly) (interchain with G-Cter in SUMO2). In terms of domain architecture, NET spans 600-682 (ESEEEDKCKP…SCLRKKRKPQ (83 aa)). Ser601 carries the phosphoserine modification. Basic and acidic residues predominate over residues 605–615 (DKCKPMSYEEK). Residues Lys645 and Lys694 each participate in a glycyl lysine isopeptide (Lys-Gly) (interchain with G-Cter in SUMO2) cross-link. A disordered region spans residues 674-1100 (CLRKKRKPQA…PKKQELRAAS (427 aa)). The span at 699-712 (SSSESESSSESSSS) shows a compositional bias: low complexity. Residues 724–744 (KSKKKGHPGREQKKHHHHHHQ) are compositionally biased toward basic residues. Pro residues-rich tracts occupy residues 751–785 (APVPQQPPPPPQQPPPPPPPQQQQQPPPPPPPPSM), 833–846 (PELPPHLPQPPEHS), and 881–890 (PPKPARPPAV). A compositionally biased stretch (low complexity) spans 926–936 (MQMQLYLQQLQ). Pro residues-rich tracts occupy residues 953–964 (QPPPPLPPPPHP), 973–996 (QPPPPPPPQPQPPPQQQHQPPPRP), and 1010–1034 (QPPPPQGQQPPHPPPGQQPPPPQPA). The span at 1041–1050 (QHHHSPRHHK) shows a compositional bias: basic residues. The C-terminal (CTD) region stretch occupies residues 1047–1362 (RHHKSDPYST…LLSIFEENLF (316 aa)). A Glycyl lysine isopeptide (Lys-Gly) (interchain with G-Cter in SUMO2) cross-link involves residue Lys1050. The span at 1071-1091 (PQMSQFQSLTHQSPPQQNVQP) shows a compositional bias: polar residues. Position 1111 is an N6-acetyllysine; alternate (Lys1111). Residue Lys1111 forms a Glycyl lysine isopeptide (Lys-Gly) (interchain with G-Cter in SUMO1); alternate linkage. Residue Lys1111 forms a Glycyl lysine isopeptide (Lys-Gly) (interchain with G-Cter in SUMO2); alternate linkage. Residues 1116–1339 (HSPIIRSEPF…KREQERRRRE (224 aa)) form a disordered region. Phosphoserine is present on residues Ser1117 and Ser1126. The segment covering 1175 to 1196 (PDKDKQKQEPKTPVAPKKDLKI) has biased composition (basic and acidic residues). Residue Lys1197 forms a Glycyl lysine isopeptide (Lys-Gly) (interchain with G-Cter in SUMO2) linkage. Residues Ser1201 and Ser1204 each carry the phosphoserine modification. The segment covering 1211–1223 (TTPSSTAKSSSDS) has biased composition (low complexity). Basic and acidic residues predominate over residues 1225–1284 (EQFRRAAREKEEREKALKAQAEHAEKEKERLRQERMRSREDEDALEQARRAHEEARRRQE). The span at 1285–1313 (QQQQQRQEQQQQQQQQAAAVAAAATPQAQ) shows a compositional bias: low complexity. Residues 1323-1339 (QQRELARKREQERRRRE) are compositionally biased toward basic and acidic residues.

Belongs to the BET family. Interacts with p53/TP53; the interaction is direct. Interacts (via CTD region) with CDK9 and CCNT1, acting as an associated component of P-TEFb complex. Interacts with RELA (when acetylated at 'Lys-310'). Interacts (via NET domain) with NSD3, CHD4, BICRA and ATAD5. The interaction with BICRA bridges BRD4 to the GBAF complex. Interacts (via NET domain) with JMJD6 (via JmjC and N-terminal domains); the interaction is stronger in presence of ssRNA and recruits JMJD6 on distal enhancers. Interacts with NSD3. Interacts with NIPBL. As to quaternary structure, interacts with SMC2. Interacts with NCAPD3. In terms of assembly, (Microbial infection) Interacts with bovine papillomavirus type 1 regulatory protein E2. This interactions may serve for the tethering of viral genomes to host mitotic chromosomes allowing successful partitioning of the viral genome during cell division. (Microbial infection) Interacts with Epstein-Barr virus (EBV) protein EBNA1; this interaction facilitates transcriptional activation by EBNA1. As to quaternary structure, (Microbial infection) Interacts with human herpes virus-8 (HHV-8) protein LANA. Post-translationally, phosphorylation by CK2 disrupt the intramolecular binding between the bromo domain 2 and the NPS region and promotes binding between the NPS and the BID regions, leading to activate the protein and promote binding to acetylated histones. In absence of phosphorylation, BRD4 does not localize to p53/TP53 target gene promoters, phosphorylation promoting recruitment to p53/TP53 target promoters. Ubiquitously expressed.

The protein resides in the nucleus. It is found in the chromosome. Inhibited by JQ1, a thieno-triazolo-1,4-diazepine derivative, which specifically inhibits members of the BET family (BRD2, BRD3 and BRD4). The first bromo domain is inhibited by GSK778 (iBET-BD1), which specifically inhibits the first bromo domain of members of the BET family (BRD2, BRD3 and BRD4). The second bromo domain is inhibited by ABBV-744, which specifically inhibits the second bromo domain of members of the BET family (BRD2, BRD3 and BRD4). The second bromo domain is inhibited by GSK046 (iBET-BD2), which specifically inhibits the second bromo domain of members of the BET family (BRD2, BRD3 and BRD4). In terms of biological role, chromatin reader protein that recognizes and binds acetylated histones and plays a key role in transmission of epigenetic memory across cell divisions and transcription regulation. Remains associated with acetylated chromatin throughout the entire cell cycle and provides epigenetic memory for postmitotic G1 gene transcription by preserving acetylated chromatin status and maintaining high-order chromatin structure. During interphase, plays a key role in regulating the transcription of signal-inducible genes by associating with the P-TEFb complex and recruiting it to promoters. Also recruits P-TEFb complex to distal enhancers, so called anti-pause enhancers in collaboration with JMJD6. BRD4 and JMJD6 are required to form the transcriptionally active P-TEFb complex by displacing negative regulators such as HEXIM1 and 7SKsnRNA complex from P-TEFb, thereby transforming it into an active form that can then phosphorylate the C-terminal domain (CTD) of RNA polymerase II. Regulates differentiation of naive CD4(+) T-cells into T-helper Th17 by promoting recruitment of P-TEFb to promoters. Promotes phosphorylation of 'Ser-2' of the C-terminal domain (CTD) of RNA polymerase II. According to a report, directly acts as an atypical protein kinase and mediates phosphorylation of 'Ser-2' of the C-terminal domain (CTD) of RNA polymerase II; these data however need additional evidences in vivo. In addition to acetylated histones, also recognizes and binds acetylated RELA, leading to further recruitment of the P-TEFb complex and subsequent activation of NF-kappa-B. Also acts as a regulator of p53/TP53-mediated transcription: following phosphorylation by CK2, recruited to p53/TP53 specific target promoters. Acts as a chromatin insulator in the DNA damage response pathway. Inhibits DNA damage response signaling by recruiting the condensin-2 complex to acetylated histones, leading to chromatin structure remodeling, insulating the region from DNA damage response by limiting spreading of histone H2AX/H2A.x phosphorylation. The polypeptide is Bromodomain-containing protein 4 (BRD4) (Homo sapiens (Human)).